The primary structure comprises 501 residues: Pyruvate kinase (501 aa).

R50 is a substrate binding site. K(+) contacts are provided by N52, S54, D85, and T86. 52 to 55 contributes to the ATP binding site; it reads NFSH. ATP is bound by residues R92 and K178. E243 contacts Mg(2+). Substrate is bound by residues G266, D267, and T299. D267 is a Mg(2+) binding site.

This sequence belongs to the pyruvate kinase family. In terms of assembly, homotetramer. Requires Mg(2+) as cofactor. It depends on K(+) as a cofactor.

The enzyme catalyses pyruvate + ATP = phosphoenolpyruvate + ADP + H(+). The protein operates within carbohydrate degradation; glycolysis; pyruvate from D-glyceraldehyde 3-phosphate: step 5/5. This chain is Pyruvate kinase (PYK1), found in Lachancea kluyveri (strain ATCC 58438 / CBS 3082 / BCRC 21498 / NBRC 1685 / JCM 7257 / NCYC 543 / NRRL Y-12651) (Yeast).